We begin with the raw amino-acid sequence, 213 residues long: Large ribosomal subunit protein uL1 (213 aa).

This sequence belongs to the universal ribosomal protein uL1 family. Part of the 50S ribosomal subunit.

In terms of biological role, probably involved in E site tRNA release. Binds directly to 23S rRNA. Its function is as follows. Protein L1 is also a translational repressor protein, it controls the translation of the L1 operon by binding to its mRNA. Thus it also controls transcription of L10 and L12 by translational coupling. Unlike the case in E.coli, where the site is in the untranslated mRNA leader, this site is within the L1 protein's structural gene. In Methanococcus vannielii (strain ATCC 35089 / DSM 1224 / JCM 13029 / OCM 148 / SB), this protein is Large ribosomal subunit protein uL1.